The primary structure comprises 634 residues: Probable potassium transport system protein Kup (634 aa).

The next 12 membrane-spanning stretches (helical) occupy residues 21–41, 58–78, 110–130, 148–168, 180–200, 217–237, 258–278, 296–316, 348–368, 377–397, 408–428, and 432–452; these read IILSAIGVVFGDIGTSPLYTL, VLGILSLIFWAMMLVVTIKYV, IYIVGILGIFGTSLFFGDGII, PHMKAFVVPITLAVLILLFLC, FGPITFLWFIAIGVVGVYNII, FFLEHGWHSMFVLGAVVLAVT, WMYVVLPMLALNYLGQGALVL, GLYPMIALATAAAVIASQALI, IYVPTVNWTLLMLVILTVIGF, AYGVAVTGTMMITTVLMIIYA, LLMIAIVFIAVDGAFFYANII, and DGAWFPLLLGVVIFTFMRTWL.

Belongs to the HAK/KUP transporter (TC 2.A.72) family.

The protein localises to the cell inner membrane. It carries out the reaction K(+)(in) + H(+)(in) = K(+)(out) + H(+)(out). Functionally, transport of potassium into the cell. Likely operates as a K(+):H(+) symporter. In Xylella fastidiosa (strain Temecula1 / ATCC 700964), this protein is Probable potassium transport system protein Kup.